Consider the following 438-residue polypeptide: 3-phosphoshikimate 1-carboxyvinyltransferase (438 aa).

Residues lysine 26, serine 27, and arginine 31 each contribute to the 3-phosphoshikimate site. Lysine 26 contributes to the phosphoenolpyruvate binding site. Phosphoenolpyruvate-binding residues include glycine 99 and arginine 127. 3-phosphoshikimate contacts are provided by serine 172, glutamine 174, aspartate 320, and lysine 347. Glutamine 174 lines the phosphoenolpyruvate pocket. Aspartate 320 (proton acceptor) is an active-site residue. Phosphoenolpyruvate-binding residues include arginine 351 and arginine 392.

Belongs to the EPSP synthase family. Monomer.

It is found in the cytoplasm. The enzyme catalyses 3-phosphoshikimate + phosphoenolpyruvate = 5-O-(1-carboxyvinyl)-3-phosphoshikimate + phosphate. Its pathway is metabolic intermediate biosynthesis; chorismate biosynthesis; chorismate from D-erythrose 4-phosphate and phosphoenolpyruvate: step 6/7. Catalyzes the transfer of the enolpyruvyl moiety of phosphoenolpyruvate (PEP) to the 5-hydroxyl of shikimate-3-phosphate (S3P) to produce enolpyruvyl shikimate-3-phosphate and inorganic phosphate. The sequence is that of 3-phosphoshikimate 1-carboxyvinyltransferase from Xanthomonas campestris pv. campestris (strain 8004).